Reading from the N-terminus, the 527-residue chain is Bifunctional purine biosynthesis protein PurH (527 aa).

The region spanning 8–156 (AGAKRPIRRA…KNHPSVAVVV (149 aa)) is the MGS-like domain.

The protein belongs to the PurH family.

The catalysed reaction is (6R)-10-formyltetrahydrofolate + 5-amino-1-(5-phospho-beta-D-ribosyl)imidazole-4-carboxamide = 5-formamido-1-(5-phospho-D-ribosyl)imidazole-4-carboxamide + (6S)-5,6,7,8-tetrahydrofolate. The enzyme catalyses IMP + H2O = 5-formamido-1-(5-phospho-D-ribosyl)imidazole-4-carboxamide. The protein operates within purine metabolism; IMP biosynthesis via de novo pathway; 5-formamido-1-(5-phospho-D-ribosyl)imidazole-4-carboxamide from 5-amino-1-(5-phospho-D-ribosyl)imidazole-4-carboxamide (10-formyl THF route): step 1/1. It functions in the pathway purine metabolism; IMP biosynthesis via de novo pathway; IMP from 5-formamido-1-(5-phospho-D-ribosyl)imidazole-4-carboxamide: step 1/1. In Mycobacterium sp. (strain JLS), this protein is Bifunctional purine biosynthesis protein PurH.